The following is a 459-amino-acid chain: UDP-N-acetylmuramoylalanine--D-glutamate ligase (459 aa).

An ATP-binding site is contributed by 119–125; the sequence is GTNGKTT.

It belongs to the MurCDEF family.

Its subcellular location is the cytoplasm. It catalyses the reaction UDP-N-acetyl-alpha-D-muramoyl-L-alanine + D-glutamate + ATP = UDP-N-acetyl-alpha-D-muramoyl-L-alanyl-D-glutamate + ADP + phosphate + H(+). It functions in the pathway cell wall biogenesis; peptidoglycan biosynthesis. Cell wall formation. Catalyzes the addition of glutamate to the nucleotide precursor UDP-N-acetylmuramoyl-L-alanine (UMA). In Lactiplantibacillus plantarum (strain ATCC BAA-793 / NCIMB 8826 / WCFS1) (Lactobacillus plantarum), this protein is UDP-N-acetylmuramoylalanine--D-glutamate ligase.